The primary structure comprises 343 residues: Ferrochelatase (343 aa).

Fe cation is bound by residues H211 and E292.

The protein belongs to the ferrochelatase family.

The protein localises to the cytoplasm. It catalyses the reaction heme b + 2 H(+) = protoporphyrin IX + Fe(2+). The protein operates within porphyrin-containing compound metabolism; protoheme biosynthesis; protoheme from protoporphyrin-IX: step 1/1. In terms of biological role, catalyzes the ferrous insertion into protoporphyrin IX. The chain is Ferrochelatase from Gluconobacter oxydans (strain 621H) (Gluconobacter suboxydans).